Reading from the N-terminus, the 63-residue chain is Large ribosomal subunit protein bL35 (63 aa).

This sequence belongs to the bacterial ribosomal protein bL35 family.

This is Large ribosomal subunit protein bL35 from Campylobacter fetus subsp. fetus (strain 82-40).